The chain runs to 483 residues: Glycogen synthase (483 aa).

Lys-18 contributes to the ADP-alpha-D-glucose binding site.

This sequence belongs to the glycosyltransferase 1 family. Bacterial/plant glycogen synthase subfamily.

The enzyme catalyses [(1-&gt;4)-alpha-D-glucosyl](n) + ADP-alpha-D-glucose = [(1-&gt;4)-alpha-D-glucosyl](n+1) + ADP + H(+). The protein operates within glycan biosynthesis; glycogen biosynthesis. Functionally, synthesizes alpha-1,4-glucan chains using ADP-glucose. The protein is Glycogen synthase of Rhodopseudomonas palustris (strain ATCC BAA-98 / CGA009).